Here is a 594-residue protein sequence, read N- to C-terminus: Protein REBELOTE (594 aa).

Basic residues predominate over residues 1–13 (MGKLGKKARKFAK). 2 disordered regions span residues 1–21 (MGKLGKKARKFAKKNLQSVEK) and 35–58 (AKRNERHQAGDKQEKKVEQQPKKR). Short sequence motifs (nuclear localization signal) lie at residues 8–15 (ARKFAKKN), 35–42 (AKRNERHQ), and 512–519 (LKKFHERS). Residues 36-58 (KRNERHQAGDKQEKKVEQQPKKR) are compositionally biased toward basic and acidic residues.

The protein belongs to the NOC2 family. As to quaternary structure, interacts with SWA2, NOC2 and NOC3 in both the nucleolus and nucleoplasm. Binds to ENAP1 and OBE1. Expressed at low levels in roots, shoots, leaves, stems, inflorescences, flowers and siliques, with highest levels dividing tissues.

The protein resides in the nucleus. Its subcellular location is the nucleolus. It localises to the nucleoplasm. Collaboratively with CYP40/SQN and ULT1, influences floral meristem (FM) determinacy in an AGAMOUS and SUPERMAN-dependent manner, thus contributing to the floral developmental homeostasis. The protein is Protein REBELOTE of Arabidopsis thaliana (Mouse-ear cress).